Here is a 1208-residue protein sequence, read N- to C-terminus: Chromosome partition protein Smc (1208 aa).

32-39 (PNGCGKSN) provides a ligand contact to ATP. 3 coiled-coil regions span residues 170 to 205 (VTKY…GERI), 239 to 504 (EARA…ARVQ), and 694 to 1054 (VIER…QLQD).

This sequence belongs to the SMC family. In terms of assembly, homodimer.

The protein localises to the cytoplasm. Required for chromosome condensation and partitioning. The polypeptide is Chromosome partition protein Smc (Thauera aminoaromatica).